The following is a 937-amino-acid chain: Isoleucine--tRNA ligase (937 aa).

Residues 58–68 (PYANGSIHIGH) carry the 'HIGH' region motif. Glu-561 provides a ligand contact to L-isoleucyl-5'-AMP. The 'KMSKS' region motif lies at 602-606 (KMSKS). ATP is bound at residue Lys-605. Zn(2+) is bound by residues Cys-900, Cys-903, Cys-920, and Cys-923.

This sequence belongs to the class-I aminoacyl-tRNA synthetase family. IleS type 1 subfamily. As to quaternary structure, monomer. Zn(2+) is required as a cofactor.

It is found in the cytoplasm. The enzyme catalyses tRNA(Ile) + L-isoleucine + ATP = L-isoleucyl-tRNA(Ile) + AMP + diphosphate. Its function is as follows. Catalyzes the attachment of isoleucine to tRNA(Ile). As IleRS can inadvertently accommodate and process structurally similar amino acids such as valine, to avoid such errors it has two additional distinct tRNA(Ile)-dependent editing activities. One activity is designated as 'pretransfer' editing and involves the hydrolysis of activated Val-AMP. The other activity is designated 'posttransfer' editing and involves deacylation of mischarged Val-tRNA(Ile). The chain is Isoleucine--tRNA ligase from Photorhabdus laumondii subsp. laumondii (strain DSM 15139 / CIP 105565 / TT01) (Photorhabdus luminescens subsp. laumondii).